The primary structure comprises 215 residues: Protein-methionine-sulfoxide reductase heme-binding subunit MsrQ (215 aa).

The next 6 helical transmembrane spans lie at 17-37, 50-70, 85-105, 121-141, 152-172, and 177-197; these read AAIWSLYVIGLCPGLWYFYLA, FEHLLGIWALRFLCLGLLVTP, ALGLIAFYYVLAHFTVYLVLD, PYIMLGMAGLIILIPLALTSN, WNTLHKLVYLVLIVGVLHFVL, and ITLEPVFYISTMVVLLGYRLV.

This sequence belongs to the MsrQ family. Heterodimer of a catalytic subunit (MsrP) and a heme-binding subunit (MsrQ). FMN is required as a cofactor. The cofactor is heme b.

Its subcellular location is the cell inner membrane. Its function is as follows. Part of the MsrPQ system that repairs oxidized periplasmic proteins containing methionine sulfoxide residues (Met-O), using respiratory chain electrons. Thus protects these proteins from oxidative-stress damage caused by reactive species of oxygen and chlorine generated by the host defense mechanisms. MsrPQ is essential for the maintenance of envelope integrity under bleach stress, rescuing a wide series of structurally unrelated periplasmic proteins from methionine oxidation. MsrQ provides electrons for reduction to the reductase catalytic subunit MsrP, using the quinone pool of the respiratory chain. The protein is Protein-methionine-sulfoxide reductase heme-binding subunit MsrQ of Agrobacterium fabrum (strain C58 / ATCC 33970) (Agrobacterium tumefaciens (strain C58)).